We begin with the raw amino-acid sequence, 296 residues long: 4-hydroxy-tetrahydrodipicolinate synthase (296 aa).

Threonine 49 contributes to the pyruvate binding site. The Proton donor/acceptor role is filled by tyrosine 137. The active-site Schiff-base intermediate with substrate is the lysine 166. A pyruvate-binding site is contributed by isoleucine 208.

Belongs to the DapA family. Homotetramer; dimer of dimers.

The protein resides in the cytoplasm. It catalyses the reaction L-aspartate 4-semialdehyde + pyruvate = (2S,4S)-4-hydroxy-2,3,4,5-tetrahydrodipicolinate + H2O + H(+). It functions in the pathway amino-acid biosynthesis; L-lysine biosynthesis via DAP pathway; (S)-tetrahydrodipicolinate from L-aspartate: step 3/4. Its function is as follows. Catalyzes the condensation of (S)-aspartate-beta-semialdehyde [(S)-ASA] and pyruvate to 4-hydroxy-tetrahydrodipicolinate (HTPA). The sequence is that of 4-hydroxy-tetrahydrodipicolinate synthase from Chlorobium luteolum (strain DSM 273 / BCRC 81028 / 2530) (Pelodictyon luteolum).